The following is a 767-amino-acid chain: Slo-interacting protein 1 (767 aa).

Residues 202 to 280 (QQSSTDTNKG…SVTLLVSRIL (79 aa)) enclose the PDZ domain. 2 disordered regions span residues 521 to 557 (GNAAAPGEEVDNSSSAYNTGDSNNSASPHQNTTNPDE) and 744 to 767 (KEERKRHIERAREKRHHQTQQQQQ). The span at 532-555 (NSSSAYNTGDSNNSASPHQNTTNP) shows a compositional bias: polar residues. A compositionally biased stretch (basic and acidic residues) spans 744 to 755 (KEERKRHIERAR).

As to quaternary structure, interacts with Slo. In embryos, it is expressed throughout the CNS and in several peripheral locations. Colocalizes with Slo.

Functionally, may selectively reduce calcium-activated potassium channel (Slo) currents by reducing the number of Slo channels in the plasma membrane. This is Slo-interacting protein 1 (Slip1) from Drosophila melanogaster (Fruit fly).